The chain runs to 343 residues: Uroporphyrinogen decarboxylase (343 aa).

Substrate is bound by residues 25–29 (RQAGR), Phe-44, Asp-75, Tyr-150, Ser-205, and His-320.

Belongs to the uroporphyrinogen decarboxylase family. Homodimer.

Its subcellular location is the cytoplasm. It catalyses the reaction uroporphyrinogen III + 4 H(+) = coproporphyrinogen III + 4 CO2. It functions in the pathway porphyrin-containing compound metabolism; protoporphyrin-IX biosynthesis; coproporphyrinogen-III from 5-aminolevulinate: step 4/4. Catalyzes the decarboxylation of four acetate groups of uroporphyrinogen-III to yield coproporphyrinogen-III. This chain is Uroporphyrinogen decarboxylase, found in Mesorhizobium japonicum (strain LMG 29417 / CECT 9101 / MAFF 303099) (Mesorhizobium loti (strain MAFF 303099)).